An 847-amino-acid chain; its full sequence is Leucine--tRNA ligase (847 aa).

The short motif at 39-49 (PYPSGALHMGH) is the 'HIGH' region element. The short motif at 613–617 (KMSKS) is the 'KMSKS' region element. Lysine 616 is an ATP binding site.

The protein belongs to the class-I aminoacyl-tRNA synthetase family.

The protein resides in the cytoplasm. It carries out the reaction tRNA(Leu) + L-leucine + ATP = L-leucyl-tRNA(Leu) + AMP + diphosphate. The sequence is that of Leucine--tRNA ligase from Gloeobacter violaceus (strain ATCC 29082 / PCC 7421).